We begin with the raw amino-acid sequence, 266 residues long: Trypsin Blo t 3 (266 aa).

An N-terminal signal peptide occupies residues 1-15; the sequence is MKVLVLFCLVSLAAA. A propeptide spanning residues 16–35 is cleaved from the precursor; the sequence is GPLKDALNKAQVDAFYAEGY. The 225-residue stretch at 36–260 folds into the Peptidase S1 domain; it reads IVDGSNAADG…RVGNYISWIK (225 aa). The cysteines at positions 60 and 76 are disulfide-linked. Catalysis depends on charge relay system residues His-75 and Asp-120. Intrachain disulfides connect Cys-187/Cys-204 and Cys-216/Cys-240. Ser-220 serves as the catalytic Charge relay system.

The protein belongs to the peptidase S1 family.

The protein localises to the secreted. The catalysed reaction is Preferential cleavage: Arg-|-Xaa, Lys-|-Xaa.. This chain is Trypsin Blo t 3, found in Blomia tropicalis (Mite).